We begin with the raw amino-acid sequence, 341 residues long: tRNA-specific 2-thiouridylase MnmA (341 aa).

ATP is bound by residues 8 to 15 (GMSGGVDS) and Met-34. Cys-94 serves as the catalytic Nucleophile. Cys-94 and Cys-188 form a disulfide bridge. Gly-118 is a binding site for ATP. Positions 136–138 (KDQ) are interaction with tRNA. The Cysteine persulfide intermediate role is filled by Cys-188. The tract at residues 290–291 (RY) is interaction with tRNA.

The protein belongs to the MnmA/TRMU family.

Its subcellular location is the cytoplasm. The catalysed reaction is S-sulfanyl-L-cysteinyl-[protein] + uridine(34) in tRNA + AH2 + ATP = 2-thiouridine(34) in tRNA + L-cysteinyl-[protein] + A + AMP + diphosphate + H(+). Functionally, catalyzes the 2-thiolation of uridine at the wobble position (U34) of tRNA, leading to the formation of s(2)U34. This is tRNA-specific 2-thiouridylase MnmA from Sulfurimonas denitrificans (strain ATCC 33889 / DSM 1251) (Thiomicrospira denitrificans (strain ATCC 33889 / DSM 1251)).